Here is a 356-residue protein sequence, read N- to C-terminus: Sensor protein BasS (356 aa).

Topologically, residues 1 to 13 are cytoplasmic; that stretch reads MRFQRRAMTLRQR. Residues 14 to 34 traverse the membrane as a helical segment; that stretch reads LMLTIGLILLVFQLISTFWLW. Residues 35 to 64 lie on the Periplasmic side of the membrane; it reads HESTEQIQLFEQALRDNRNNDRHIMHEIRE. The chain crosses the membrane as a helical span at residues 65–88; sequence AVASLIVPGVFMVSLTLLICYQAV. Residues 89 to 141 enclose the HAMP domain; sequence RRITRPLAELQKELEARTADNLAPIAIHSSTLEIESVVSAINQLVTRLTTTLD. At 89–356 the chain is on the cytoplasmic side; the sequence is RRITRPLAEL…TRAWVLLKKA (268 aa). The 208-residue stretch at 149 to 356 folds into the Histidine kinase domain; it reads DVAHELRTPL…TRAWVLLKKA (208 aa). Phosphohistidine; by autocatalysis is present on H152.

Autophosphorylated.

The protein resides in the cell inner membrane. The catalysed reaction is ATP + protein L-histidine = ADP + protein N-phospho-L-histidine.. Member of the two-component regulatory system BasS/BasR. Autophosphorylates and activates BasR by phosphorylation. Plays a role in the adaptation of the organism to the host environment, in particular to neutrophils, and therefore it plays a role in virulence as well. The chain is Sensor protein BasS (basS) from Salmonella typhimurium (strain LT2 / SGSC1412 / ATCC 700720).